The following is a 206-amino-acid chain: Large ribosomal subunit protein mL62 (206 aa).

A mitochondrion-targeting transit peptide spans 1–29 (MAATRCLRWGLSRAGVWLLPPPARCPRRA). The residue at position 90 (Gln90) is an N5-methylglutamine.

It belongs to the prokaryotic/mitochondrial release factor family. Mitochondrion-specific ribosomal protein mL62 subfamily. In terms of assembly, component of the mitochondrial large ribosomal subunit (mt-LSU). Mature mammalian 55S mitochondrial ribosomes consist of a small (28S) and a large (39S) subunit. The 28S small subunit contains a 12S ribosomal RNA (12S mt-rRNA) and 30 different proteins. The 39S large subunit contains a 16S rRNA (16S mt-rRNA), a copy of mitochondrial valine transfer RNA (mt-tRNA(Val)), which plays an integral structural role, and 52 different proteins. Methylation of glutamine in the GGQ triplet by HEMK1. In terms of tissue distribution, down-regulated during the in vitro differentiation of HT29-D4 colon carcinoma cells.

It localises to the mitochondrion. The catalysed reaction is an N-acyl-L-alpha-aminoacyl-tRNA + H2O = an N-acyl-L-amino acid + a tRNA + H(+). In terms of biological role, essential peptidyl-tRNA hydrolase component of the mitochondrial large ribosomal subunit. Acts as a codon-independent translation release factor that has lost all stop codon specificity and directs the termination of translation in mitochondrion, possibly in case of abortive elongation. Involved in the hydrolysis of peptidyl-tRNAs that have been prematurely terminated and thus in the recycling of stalled mitochondrial ribosomes. The chain is Large ribosomal subunit protein mL62 from Homo sapiens (Human).